The primary structure comprises 228 residues: MQFQHPHAPLYAPAPAPPAHPTPFYIEDILGRTGSSSGPVVPTPTLPSPNSSFTSLIPSYRTPIYELTPIHPVLSQYASMYPFQRSVGDFAHALIRHDPLGKPLLWSPFIQRPLHKRKGGQVRFSNDQTIELEKKFETQKYLSPPERKRLAKMLQLSERQVKTWFQNRRAKWRRLKQENPPSTGKREAEDSDTRRLSDAAARARELESGASTDSEELLDIEDEHQFTL.

The segment at residues 117–176 (RKGGQVRFSNDQTIELEKKFETQKYLSPPERKRLAKMLQLSERQVKTWFQNRRAKWRRLK) is a DNA-binding region (homeobox). Residues 175–228 (LKQENPPSTGKREAEDSDTRRLSDAAARARELESGASTDSEELLDIEDEHQFTL) form a disordered region. Over residues 184 to 207 (GKREAEDSDTRRLSDAAARARELE) the composition is skewed to basic and acidic residues. Residues 213–222 (DSEELLDIED) show a composition bias toward acidic residues.

As to expression, expressed in embryonic endothelial and blood lineages. From late-blastula stage, expression is restricted to the dorsal marginal region of the extraembryonic yolk syncytial layer (YSL). By the onset of gastrulation, expressed in the entire dorsal half of the YSL. Post-gastrulation, expression appears in both anterior and posterior lateral plate mesoderm by the 3-somite stage. Posteriorly, expression is in the intermediate cell mass (ICM), which contains both endothelial and blood precursors. Subsequently expressed in the developing endothelial cells including the endocardium until the onset of circulation (24 hpf) and disappears completely by 30 hpf, at which point expression is seen in the thyroid and liver primordia. Also expressed in the developing biliary tree and pancreas.

It is found in the nucleus. Its function is as follows. Recognizes the DNA sequence 5'-ATTAA-3'. Transcriptional repressor. Regulates the differentiation of both endothelial and blood cells. Plays a role in embryonic dorsoventral patterning by regulating bmp expression. May establish anterior identity. Functions in the embryo to regulate liver development. Functions extraembryonically to generate organ chirality. In Danio rerio (Zebrafish), this protein is Hematopoietically-expressed homeobox protein hhex.